Here is a 613-residue protein sequence, read N- to C-terminus: Phostensin (613 aa).

Over residues 15–33 the composition is skewed to basic and acidic residues; that stretch reads RRQEEASVRGREKAERERL. Disordered stretches follow at residues 15 to 231 and 266 to 505; these read RRQE…SAYQ and GEER…GKKR. Phosphoserine occurs at positions 54, 125, 133, 175, and 195. Composition is skewed to basic and acidic residues over residues 104-154 and 167-191; these read RSEE…ERRL and LEAR…EPWK. Phosphothreonine is present on Thr-199. Over residues 199-221 the composition is skewed to basic and acidic residues; the sequence is TPERSLRLAESREQSPRRKEVES. Ser-224 is modified (phosphoserine). Positions 266-282 are enriched in basic and acidic residues; it reads GEERQGYSEKCGRKEEW. Over residues 301–310 the composition is skewed to polar residues; that stretch reads REAQGSSSTG. Composition is skewed to basic and acidic residues over residues 314–327, 340–350, and 357–367; these read AEQR…RGMK, KAREWTPRDIE, and EPSESAEKRLE. A phosphoserine mark is found at Ser-368 and Ser-432. Residues 424–446 are compositionally biased toward pro residues; that stretch reads QPPPPAPLSPPPPAPTAPQPPGD. Lys-457 is modified (N6-acetyllysine). Over residues 476 to 499 the composition is skewed to low complexity; it reads PRRSVPPTTPATPTSPATADAAVP. Phosphoserine occurs at positions 490 and 530. The interval 552 to 594 is disordered; the sequence is QYPSESSVLEELGPEPEVPSAPNPPAAQPDDEEDEEELLLLQP. Pro residues predominate over residues 567–578; the sequence is PEVPSAPNPPAA. Residues 580–589 are compositionally biased toward acidic residues; sequence PDDEEDEEEL.

In terms of assembly, interacts with Protein phosphatase 1 (PP1).

Its subcellular location is the cytoplasm. The protein resides in the cytoskeleton. In terms of biological role, may target protein phosphatase 1 to F-actin cytoskeleton. The protein is Phostensin (PPP1R18) of Macaca mulatta (Rhesus macaque).